Consider the following 59-residue polypeptide: uncharacterized protein (59 aa).

The tract at residues 27–59 (SCFQNRPPEPASFQNLRPEPASLQNLRTEPTSF) is disordered. Residues 48-59 (SLQNLRTEPTSF) are compositionally biased toward polar residues.

This is an uncharacterized protein from Homo sapiens (Human).